The primary structure comprises 269 residues: MVRIAIAGAAGRMGRNLVKASHLNPEASVTAGSERPESSLVGVDVGELCGEGKFDVFLTDDLTKEVDNFDVVIDFTAPVSTLANLELCKQHGKSIIIGTTGFSEEERELIDEAAKQVPVVMAPNYSVGVNLVFKLLEKAAKVMGDYCDIEIVEAHHRHKVDAPSGTAIGMGEAIAGAMGNKLSDVAVYAREGITGERTKDEIGFATIRAGDIVGEHTAMFADIGERVEITHKATDRMTFANGAVKAAVWLHSKPAGFYTMTDVLGLNEL.

Residues 8 to 13 and Glu34 each bind NAD(+); that span reads GAAGRM. An NADP(+)-binding site is contributed by Arg35. NAD(+) is bound by residues 98–100 and 122–125; these read GTT and APNY. The Proton donor/acceptor role is filled by His155. His156 contributes to the (S)-2,3,4,5-tetrahydrodipicolinate binding site. Lys159 functions as the Proton donor in the catalytic mechanism. (S)-2,3,4,5-tetrahydrodipicolinate is bound at residue 165–166; that stretch reads GT.

This sequence belongs to the DapB family.

Its subcellular location is the cytoplasm. It catalyses the reaction (S)-2,3,4,5-tetrahydrodipicolinate + NAD(+) + H2O = (2S,4S)-4-hydroxy-2,3,4,5-tetrahydrodipicolinate + NADH + H(+). The enzyme catalyses (S)-2,3,4,5-tetrahydrodipicolinate + NADP(+) + H2O = (2S,4S)-4-hydroxy-2,3,4,5-tetrahydrodipicolinate + NADPH + H(+). Its pathway is amino-acid biosynthesis; L-lysine biosynthesis via DAP pathway; (S)-tetrahydrodipicolinate from L-aspartate: step 4/4. Functionally, catalyzes the conversion of 4-hydroxy-tetrahydrodipicolinate (HTPA) to tetrahydrodipicolinate. The sequence is that of 4-hydroxy-tetrahydrodipicolinate reductase from Vibrio campbellii (strain ATCC BAA-1116).